A 537-amino-acid chain; its full sequence is Glutamyl-tRNA reductase, chloroplastic (537 aa).

The transit peptide at 1 to 48 (MMASTTSATAAGGAFAAAKTRAGSSAAGGGACARVAAGGRRRSGVVVR) directs the protein to the chloroplast. Substrate is bound by residues 134–137 (TCNR), S194, 199–201 (EGQ), and Q205. The active-site Nucleophile is C135. 276–281 (GAGKMG) serves as a coordination point for NADP(+).

Belongs to the glutamyl-tRNA reductase family.

It localises to the plastid. It is found in the chloroplast. It carries out the reaction (S)-4-amino-5-oxopentanoate + tRNA(Glu) + NADP(+) = L-glutamyl-tRNA(Glu) + NADPH + H(+). It participates in porphyrin-containing compound metabolism; protoporphyrin-IX biosynthesis; 5-aminolevulinate from L-glutamyl-tRNA(Glu): step 1/2. Catalyzes the NADPH-dependent reduction of glutamyl-tRNA(Glu) to glutamate 1-semialdehyde (GSA). The sequence is that of Glutamyl-tRNA reductase, chloroplastic from Oryza sativa subsp. indica (Rice).